Reading from the N-terminus, the 1222-residue chain is Chitin synthase 4 (1222 aa).

2 disordered regions span residues 1 to 101 and 138 to 200; these read MSLP…ERNR and TERT…KRIE. Polar residues-rich tracts occupy residues 11-24 and 42-77; these read QAYNQRSVYRNSPS and NQASHQRGKSGSSFAESIGINSNTESMPLSPTSPDG. Residues 182-196 show a composition bias toward basic residues; sequence SGKIKRKSRRHSKPP. Helical transmembrane passes span 205-225 and 243-263; these read PPTFWNVYCAIVTFWAPGFIM and MGLISIILIIMAIVGFLTFGF. 3 N-linked (GlcNAc...) asparagine glycosylation sites follow: Asn378, Asn418, and Asn440. Residues 513-533 traverse the membrane as a helical segment; that stretch reads ALILSVVGVRFFLAIIFQWFI. The interval 576–630 is disordered; that stretch reads TVYGSSDRSSKRASFLPTTSRFSSVGGPDIRSQGGRRMPTTMASQSTSNQLLTPN. Residues 616–630 are compositionally biased toward polar residues; sequence TMASQSTSNQLLTPN. Residues Asn637 and Asn1030 are each glycosylated (N-linked (GlcNAc...) asparagine). The next 3 membrane-spanning stretches (helical) occupy residues 1055–1075, 1089–1109, and 1113–1133; these read FIIFVELVGTLVLPAAIAFTF, IIPLVLLGLILGLPGLLVIIT, and WSYIVWMLIYLLALPIWNFVL. The tract at residues 1202–1222 is disordered; that stretch reads GGQTWTSPPGHQYNEEYYSDA.

It belongs to the chitin synthase family. Class IV subfamily.

Its subcellular location is the cell membrane. It catalyses the reaction [(1-&gt;4)-N-acetyl-beta-D-glucosaminyl](n) + UDP-N-acetyl-alpha-D-glucosamine = [(1-&gt;4)-N-acetyl-beta-D-glucosaminyl](n+1) + UDP + H(+). Its function is as follows. Polymerizes chitin, a structural polymer of the cell wall and septum, by transferring the sugar moiety of UDP-GlcNAc to the non-reducing end of the growing chitin polymer. Shows additive effects in septum formation with CHS1, CHS2, CHS3A, CHS5, CHS6 and CHS7. Regulates conidiation. Involved in virulence and mediates mycotoxin deoxinivalenol (DON) biosynthesis via the regulation of the expression of TRI4, TRI5 and TRI6. The sequence is that of Chitin synthase 4 from Gibberella zeae (strain ATCC MYA-4620 / CBS 123657 / FGSC 9075 / NRRL 31084 / PH-1) (Wheat head blight fungus).